Here is a 402-residue protein sequence, read N- to C-terminus: E3 ubiquitin-protein ligase makorin-2 (402 aa).

C3H1-type zinc fingers lie at residues 2–29 (TTKQVTCRYFLHGVCREGNHCQFSHDPS), 31–58 (SKPSTICKFYQRGTCAYGERCRYDHVKL), and 141–168 (QDLPRLCPYAAVGHCYYEENCIYLHGDK). The interval 169-198 (CEVCGLQVLDPHNPEQRSMHEKMCLLAFEA) is makorin-type Cys-His. The RING-type zinc-finger motif lies at 214–268 (CSICMEVVVQKMNPSDRRFGILSSCCHVFCLACIRKWRCTRNFSNKIIKSCPECR). Residues 297–326 (GVGKKPCKYFDQGRGSCPFGGKCLYLHALP) form a C3H1-type 4 zinc finger.

The protein resides in the cytoplasm. Its subcellular location is the nucleus. It carries out the reaction S-ubiquitinyl-[E2 ubiquitin-conjugating enzyme]-L-cysteine + [acceptor protein]-L-lysine = [E2 ubiquitin-conjugating enzyme]-L-cysteine + N(6)-ubiquitinyl-[acceptor protein]-L-lysine.. It participates in protein modification; protein ubiquitination. Its function is as follows. E3 ubiquitin ligase catalyzing the covalent attachment of ubiquitin moieties onto substrate proteins. Inhibits neurogenesis and axis formation during embryonic development by modulating the phosphatidylinositol 3-kinase (PI3K) pathway. Acts downstream of PI3K and akt1 to up-regulate gsk3b mRNA expression. This chain is E3 ubiquitin-protein ligase makorin-2, found in Takifugu rubripes (Japanese pufferfish).